Here is a 567-residue protein sequence, read N- to C-terminus: Diphtheria toxin (567 aa).

Residues 1–32 form the signal peptide; the sequence is MLVRGYVVSRKLFASILIGALLGIGAPPSAHA. Residues H53 and Y97 each contribute to the NAD(+) site. E180 is an active-site residue. 2 disulfide bridges follow: C218–C233 and C493–C503.

In terms of assembly, homodimer. Post-translationally, proteolytic activation by host furin cleaves the protein in two parts, Diphtheria toxin fragment A and Diphtheria toxin fragment B; which remain associated via a disulfide bond.

The catalysed reaction is diphthamide-[translation elongation factor 2] + NAD(+) = N-(ADP-D-ribosyl)diphthamide-[translation elongation factor 2] + nicotinamide + H(+). With respect to regulation, partially inhibited by 1,8-naphthalimide (NAP). Its function is as follows. Diphtheria toxin, produced by a phage infecting Corynebacterium diphtheriae, is a proenzyme that, after activation, catalyzes the covalent attachment of the ADP ribose moiety of NAD to eukaryotic elongation factor 2 (eEF-2). Fragment A is the catalytic portion responsible for enzymatic ADP-ribosylation of elongation factor 2, while fragment B is responsible for binding of toxin to cell receptors and entry of fragment A. The protein is Diphtheria toxin of Corynebacterium diphtheriae.